Here is a 331-residue protein sequence, read N- to C-terminus: Ferredoxin--NADP reductase 2 (331 aa).

Residues Glu-37, Gln-45, Tyr-50, Val-90, Phe-124, Asp-286, and Thr-327 each coordinate FAD.

It belongs to the ferredoxin--NADP reductase type 2 family. As to quaternary structure, homodimer. The cofactor is FAD.

It catalyses the reaction 2 reduced [2Fe-2S]-[ferredoxin] + NADP(+) + H(+) = 2 oxidized [2Fe-2S]-[ferredoxin] + NADPH. The protein is Ferredoxin--NADP reductase 2 of Listeria monocytogenes serotype 4b (strain F2365).